A 481-amino-acid chain; its full sequence is Mechanosensory protein 2 (481 aa).

A compositionally biased stretch (low complexity) spans 1–22 (MSATMSSARNSVVSLSSNGSVK). 2 disordered regions span residues 1 to 67 (MSAT…MATR) and 80 to 104 (SANSDDDSVKKEKQAEKDVEKGNGK). The segment covering 27–38 (LVSNERSSSIQQ) has biased composition (polar residues). Residues 86–104 (DSVKKEKQAEKDVEKGNGK) are compositionally biased toward basic and acidic residues. A helical transmembrane segment spans residues 115–135 (GVCGWILTILSYLLIFFTLPI). Gly residues predominate over residues 403–421 (EGGGGHGHSHGGGGGGLGS). Residues 403–481 (EGGGGHGHSH…SQLDPALLIR (79 aa)) are disordered. Low complexity predominate over residues 433–447 (SGPSTTTTSGRPLLR). The span at 463-473 (APNQSQTSVSQ) shows a compositional bias: polar residues.

This sequence belongs to the band 7/mec-2 family. Component of a non-voltage-gated amiloride-sensitive cation channel complex (also called the degenerin channel complex) composed of at least the mec-2, mec-4, mec-6 and mec-10 subunits; the complex mediates mechanotransduction in touch cells. Interacts with mec-6 and mec-4.

The protein resides in the membrane. Functionally, subunit of an amiloride-sensitive cation channel (degenerin channel complex) permeable for sodium, potassium, lithium and N-methylglucamine, and required for mechanosensory transduction (touch sensitivity). Positively regulates the activity of the putative mechanosensory transduction channel. May link the mechanosensory channel and the microtubule cytoskeleton of the touch receptor neurons. Required for the function of a set of six touch receptor neurons. This is Mechanosensory protein 2 from Caenorhabditis elegans.